Reading from the N-terminus, the 444-residue chain is Probable kynurenine--oxoglutarate transaminase BNA3 (444 aa).

K271 is modified (N6-(pyridoxal phosphate)lysine).

It belongs to the class-I pyridoxal-phosphate-dependent aminotransferase family. As to quaternary structure, homodimer. Pyridoxal 5'-phosphate serves as cofactor.

The protein localises to the cytoplasm. It localises to the mitochondrion. It catalyses the reaction L-kynurenine + 2-oxoglutarate = kynurenate + L-glutamate + H2O. The protein operates within amino-acid degradation; L-kynurenine degradation; kynurenate from L-kynurenine: step 1/2. Functionally, catalyzes the irreversible transamination of the L-tryptophan metabolite L-kynurenine to form kynurenic acid (KA). The chain is Probable kynurenine--oxoglutarate transaminase BNA3 (BNA3) from Saccharomyces cerevisiae (strain ATCC 204508 / S288c) (Baker's yeast).